Here is a 157-residue protein sequence, read N- to C-terminus: DNA-binding protein MNB1B (157 aa).

Disordered stretches follow at residues 1–45 (MKGA…KRAP), 59–87 (FKEKNPKNKSVAAVGKAAGDRWKSLSESD), and 109–157 (YNKG…DDDE). Composition is skewed to basic and acidic residues over residues 10 to 27 (AKADAKLAVKSKGAEKPA) and 76 to 87 (AGDRWKSLSESD). The HMG box DNA-binding region spans 41-110 (PKRAPSAFFV…EYNKAIAAYN (70 aa)). Acidic residues-rich tracts occupy residues 124-133 (EEEEEDEEES) and 141-157 (NDEDDEEGSEEDEDDDE). Serine 149 carries the post-translational modification Phosphoserine; by CK2.

In terms of tissue distribution, expressed in all tissues examined.

It localises to the nucleus. Its function is as follows. Recognizes an AAGG motif at the MNF1-binding site. The chain is DNA-binding protein MNB1B (MNB1B) from Zea mays (Maize).